The following is a 536-amino-acid chain: Proto-oncogene tyrosine-protein kinase Src (536 aa).

Residues M1–A53 form a disordered region. A lipid anchor (N-myristoyl glycine) is attached at G2. The segment covering K7–E19 has biased composition (basic and acidic residues). S17 bears the Phosphoserine mark. The residue at position 75 (S75) is a Phosphoserine; by CDK5. The SH3 domain maps to G84–S145. The region spanning W151 to C248 is the SH2 domain. At Y187 the chain carries Phosphotyrosine. One can recognise a Protein kinase domain in the interval L270 to F523. Residues L276–V284 and K298 contribute to the ATP site. Residue D389 is the Proton acceptor of the active site. Y419 is modified (phosphotyrosine; by autocatalysis). At Y419 the chain carries Phosphotyrosine; by FAK2. Residue Y530 is modified to Phosphotyrosine; by CSK.

This sequence belongs to the protein kinase superfamily. Tyr protein kinase family. SRC subfamily. As to quaternary structure, part of a complex comprised of PTPRA, BCAR1, BCAR3 (via SH2 domain) and SRC; the formation of the complex is dependent on integrin mediated-tyrosine phosphorylation of PTPRA. Interacts with DDEF1/ASAP1; via the SH3 domain. Interacts with CCPG1. Identified in a complex containing FGFR4, NCAM1, CDH2, PLCG1, FRS2, SRC, SHC1, GAP43 and CTTN. Interacts with ERBB2, STAT1 and PNN. Interacts with DDR1, DDR2 and DAB2. Interacts with CDCP1, TGFB1I1 and TOM1L2. Interacts with the cytoplasmic domain of MUC1, phosphorylates it and increases binding of MUC1 with beta-catenin. Interacts with RALGPS1; via the SH3 domain. Interacts with CAV2 (tyrosine phosphorylated form). Interacts (via the SH3 domain and the protein kinase domain) with ARRB1; the interaction is independent of the phosphorylation state of SRC C-terminus. Interacts with ARRB1 and ARRB2. Interacts with SRCIN1. Interacts with NDFIP2 and more weakly with NDFIP1. Interacts with PIK3CA and/or PIK3C2B, PTK2/FAK1 and ESR1 (dimethylated on arginine). Interacts with FASLG. Interacts (via SH2 domain) with the 'Tyr-402' phosphorylated form of PTK2B/PYK2. Interacts (via SH2 domain) with FLT3 (tyrosine phosphorylated). Interacts with PDGFRA (tyrosine phosphorylated). Interacts with CSF1R. Interacts (via SH2 and SH3 domain) with TNK2. Interacts (via protein kinase domain) with the tyrosine phosphorylated form of RUNX3 (via runt domain). Interacts with TRAF3 (via RING-type zinc finger domain). Interacts with RIGI, MAVS and TBK1. Interacts (via SH2 domain) with RACK1; the interaction is enhanced by tyrosine phosphorylation of RACK1 and inhibits SRC activity. Interacts with EPHB1; activates the MAPK/ERK cascade to regulate cell migration. Interacts with FCAMR. Interacts (via SH2 domain) with the 'Tyr-9' phosphorylated form of PDPK1. Interacts with AMOTL2; this interaction regulates the translocation of phosphorylated SRC to peripheral cell-matrix adhesion sites. Interacts with TRAP1. Interacts with CBLC; the interaction is enhanced when SRC is phosphorylated at Tyr-419. Interacts with ARHGEF5. Interacts (via cytoplasmic domain) with CEACAM1 (via SH2 domain); this interaction is regulated by trans-homophilic cell adhesion. Interacts with MPP2. Interacts with PRR7. Interacts (via kinase domain and to a lesser extent the SH2 domain) directly with PDLIM4; this interaction results in PTPN13-mediated dephosphorylation of this protein leading to its inactivation. Interacts with P85 (PIK3R1 or PIK3R2). Interacts with HNRNPA2B1. Interacts with IL6ST/gp130. Interacts (via SH3 domain) with PELP1 in the presence of 17-beta-estradiol. Interacts with AMBRA1. (Microbial infection) Interacts with HEV ORF3 protein; via the SH3 domain. In terms of assembly, (Microbial infection) Interacts (via SH2 domain) with HCV non-structural protein 5A (via N-terminus). Post-translationally, myristoylated at Gly-2, and this is essential for targeting to membranes. In terms of processing, dephosphorylated at Tyr-530 by PTPRJ. Phosphorylated on Tyr-530 by c-Src kinase (CSK). The phosphorylated form is termed pp60c-src. Dephosphorylated by PTPRJ at Tyr-419. Normally maintained in an inactive conformation with the SH2 domain engaged with Tyr-530, the SH3 domain engaged with the SH2-kinase linker, and Tyr-419 dephosphorylated. Dephosphorylation of Tyr-530 as a result of protein tyrosine phosphatase (PTP) action disrupts the intramolecular interaction between the SH2 domain and Tyr-530, Tyr-419 can then become autophosphorylated, resulting in SRC activation. Phosphorylation of Tyr-530 by CSK allows this interaction to reform, resulting in SRC inactivation. CDK5-mediated phosphorylation at Ser-75 targets SRC to ubiquitin-dependent degradation and thus leads to cytoskeletal reorganization. Phosphorylated by PTK2/FAK1; this enhances kinase activity. Phosphorylated by PTK2B/PYK2; this enhances kinase activity. Upon activation of IL6ST by IL6, Tyr-419 is phosphorylated and Tyr-530 dephosphorylated. Displays reduced levels of autophosphorylation at Tyr-419 compared to isoforms 2 and 3. Post-translationally, displays enhanced levels of autophosphorylation at Tyr-419 compared to isoform 1. In terms of processing, displays enhanced levels of autophosphorylation at Tyr-419 compared to isoform 1. Shows reduced phosphorylation at Tyr-527 compared to isoforms 1 and 2. S-nitrosylation is important for activation of its kinase activity. Post-translationally, ubiquitinated in response to CDK5-mediated phosphorylation. Ubiquitination mediated by CBLC requires SRC autophosphorylation at Tyr-419 and may lead to lysosomal degradation. As to expression, expressed ubiquitously. Expressed in the skin (at protein level). Platelets, neurons and osteoclasts express 5-fold to 200-fold higher levels than most other tissues. In terms of tissue distribution, expressed in spleen and liver. Expressed in brain.

Its subcellular location is the cell membrane. It localises to the mitochondrion inner membrane. It is found in the nucleus. The protein localises to the cytoplasm. The protein resides in the cytoskeleton. Its subcellular location is the perinuclear region. It localises to the cell junction. It is found in the focal adhesion. It catalyses the reaction L-tyrosyl-[protein] + ATP = O-phospho-L-tyrosyl-[protein] + ADP + H(+). Its activity is regulated as follows. Phosphorylation by CSK at Tyr-530 inhibits kinase activity. Inhibitory phosphorylation at Tyr-530 is enhanced by heme. Further phosphorylation by CDK1 partially reactivates CSK-inactivated SRC and facilitates complete reactivation by protein tyrosine phosphatase PTPRC. Integrin engagement stimulates kinase activity. Phosphorylation by PTK2/FAK1 enhances kinase activity. Butein and pseudosubstrate-based peptide inhibitors like CIYKYYF act as inhibitors. Phosphorylation at Tyr-419 increases kinase activity. Its function is as follows. Non-receptor protein tyrosine kinase which is activated following engagement of many different classes of cellular receptors including immune response receptors, integrins and other adhesion receptors, receptor protein tyrosine kinases, G protein-coupled receptors as well as cytokine receptors. Participates in signaling pathways that control a diverse spectrum of biological activities including gene transcription, immune response, cell adhesion, cell cycle progression, apoptosis, migration, and transformation. Due to functional redundancy between members of the SRC kinase family, identification of the specific role of each SRC kinase is very difficult. SRC appears to be one of the primary kinases activated following engagement of receptors and plays a role in the activation of other protein tyrosine kinase (PTK) families. Receptor clustering or dimerization leads to recruitment of SRC to the receptor complexes where it phosphorylates the tyrosine residues within the receptor cytoplasmic domains. Plays an important role in the regulation of cytoskeletal organization through phosphorylation of specific substrates such as AFAP1. Phosphorylation of AFAP1 allows the SRC SH2 domain to bind AFAP1 and to localize to actin filaments. Cytoskeletal reorganization is also controlled through the phosphorylation of cortactin (CTTN). When cells adhere via focal adhesions to the extracellular matrix, signals are transmitted by integrins into the cell resulting in tyrosine phosphorylation of a number of focal adhesion proteins, including PTK2/FAK1 and paxillin (PXN). In addition to phosphorylating focal adhesion proteins, SRC is also active at the sites of cell-cell contact adherens junctions and phosphorylates substrates such as beta-catenin (CTNNB1), delta-catenin (CTNND1), and plakoglobin (JUP). Another type of cell-cell junction, the gap junction, is also a target for SRC, which phosphorylates connexin-43 (GJA1). SRC is implicated in regulation of pre-mRNA-processing and phosphorylates RNA-binding proteins such as KHDRBS1. Phosphorylates PKP3 at 'Tyr-195' in response to reactive oxygen species, which may cause the release of PKP3 from desmosome cell junctions into the cytoplasm. Also plays a role in PDGF-mediated tyrosine phosphorylation of both STAT1 and STAT3, leading to increased DNA binding activity of these transcription factors. Involved in the RAS pathway through phosphorylation of RASA1 and RASGRF1. Plays a role in EGF-mediated calcium-activated chloride channel activation. Required for epidermal growth factor receptor (EGFR) internalization through phosphorylation of clathrin heavy chain (CLTC and CLTCL1) at 'Tyr-1477'. Involved in beta-arrestin (ARRB1 and ARRB2) desensitization through phosphorylation and activation of GRK2, leading to beta-arrestin phosphorylation and internalization. Has a critical role in the stimulation of the CDK20/MAPK3 mitogen-activated protein kinase cascade by epidermal growth factor. Might be involved not only in mediating the transduction of mitogenic signals at the level of the plasma membrane but also in controlling progression through the cell cycle via interaction with regulatory proteins in the nucleus. Plays an important role in osteoclastic bone resorption in conjunction with PTK2B/PYK2. Both the formation of a SRC-PTK2B/PYK2 complex and SRC kinase activity are necessary for this function. Recruited to activated integrins by PTK2B/PYK2, thereby phosphorylating CBL, which in turn induces the activation and recruitment of phosphatidylinositol 3-kinase to the cell membrane in a signaling pathway that is critical for osteoclast function. Promotes energy production in osteoclasts by activating mitochondrial cytochrome C oxidase. Phosphorylates DDR2 on tyrosine residues, thereby promoting its subsequent autophosphorylation. Phosphorylates RUNX3 and COX2 on tyrosine residues, TNK2 on 'Tyr-284' and CBL on 'Tyr-731'. Enhances RIGI-elicited antiviral signaling. Phosphorylates PDPK1 at 'Tyr-9', 'Tyr-373' and 'Tyr-376'. Phosphorylates BCAR1 at 'Tyr-128'. Phosphorylates CBLC at multiple tyrosine residues, phosphorylation at 'Tyr-341' activates CBLC E3 activity. Phosphorylates synaptic vesicle protein synaptophysin (SYP). Involved in anchorage-independent cell growth. Required for podosome formation. Mediates IL6 signaling by activating YAP1-NOTCH pathway to induce inflammation-induced epithelial regeneration. Phosphorylates OTUB1, promoting deubiquitination of RPTOR. Phosphorylates caspase CASP8 at 'Tyr-380' which negatively regulates CASP8 processing and activation, down-regulating CASP8 proapoptotic function. In terms of biological role, non-receptor protein tyrosine kinase which phosphorylates synaptophysin with high affinity. Functionally, non-receptor protein tyrosine kinase which shows higher basal kinase activity than isoform 1, possibly due to weakened intramolecular interactions which enhance autophosphorylation of Tyr-419 and subsequent activation. The SH3 domain shows reduced affinity with the linker sequence between the SH2 and kinase domains which may account for the increased basal activity. Displays altered substrate specificity compared to isoform 1, showing weak affinity for synaptophysin and for peptide substrates containing class I or class II SH3 domain-binding motifs. Plays a role in L1CAM-mediated neurite elongation, possibly by acting downstream of L1CAM to drive cytoskeletal rearrangements involved in neurite outgrowth. Non-receptor protein tyrosine kinase which shows higher basal kinase activity than isoform 1, possibly due to weakened intramolecular interactions which enhance autophosphorylation of Tyr-419 and subsequent activation. The SH3 domain shows reduced affinity with the linker sequence between the SH2 and kinase domains which may account for the increased basal activity. Displays altered substrate specificity compared to isoform 1, showing weak affinity for synaptophysin and for peptide substrates containing class I or class II SH3 domain-binding motifs. Plays a role in neurite elongation. This is Proto-oncogene tyrosine-protein kinase Src from Homo sapiens (Human).